Reading from the N-terminus, the 240-residue chain is Sugar fermentation stimulation protein homolog (240 aa).

This sequence belongs to the SfsA family.

This is Sugar fermentation stimulation protein homolog from Natranaerobius thermophilus (strain ATCC BAA-1301 / DSM 18059 / JW/NM-WN-LF).